The chain runs to 328 residues: Aspartate carbamoyltransferase catalytic subunit (328 aa).

Positions 55 and 56 each coordinate carbamoyl phosphate. Residue lysine 83 coordinates L-aspartate. Carbamoyl phosphate-binding residues include arginine 105, histidine 135, and glutamine 138. Residues arginine 176 and arginine 230 each coordinate L-aspartate. Positions 271 and 272 each coordinate carbamoyl phosphate.

It belongs to the aspartate/ornithine carbamoyltransferase superfamily. ATCase family. In terms of assembly, heterododecamer (2C3:3R2) of six catalytic PyrB chains organized as two trimers (C3), and six regulatory PyrI chains organized as three dimers (R2).

The catalysed reaction is carbamoyl phosphate + L-aspartate = N-carbamoyl-L-aspartate + phosphate + H(+). The protein operates within pyrimidine metabolism; UMP biosynthesis via de novo pathway; (S)-dihydroorotate from bicarbonate: step 2/3. Its function is as follows. Catalyzes the condensation of carbamoyl phosphate and aspartate to form carbamoyl aspartate and inorganic phosphate, the committed step in the de novo pyrimidine nucleotide biosynthesis pathway. This is Aspartate carbamoyltransferase catalytic subunit from Streptomyces griseus subsp. griseus (strain JCM 4626 / CBS 651.72 / NBRC 13350 / KCC S-0626 / ISP 5235).